We begin with the raw amino-acid sequence, 505 residues long: Lysine--tRNA ligase (505 aa).

The Mg(2+) site is built by Glu-415 and Glu-422.

The protein belongs to the class-II aminoacyl-tRNA synthetase family. As to quaternary structure, homodimer. The cofactor is Mg(2+).

It is found in the cytoplasm. It carries out the reaction tRNA(Lys) + L-lysine + ATP = L-lysyl-tRNA(Lys) + AMP + diphosphate. The sequence is that of Lysine--tRNA ligase from Shigella dysenteriae serotype 1 (strain Sd197).